A 309-amino-acid chain; its full sequence is 4-hydroxy-3-methylbut-2-enyl diphosphate reductase (309 aa).

Cys13 contributes to the [4Fe-4S] cluster binding site. (2E)-4-hydroxy-3-methylbut-2-enyl diphosphate-binding residues include His42 and His75. Dimethylallyl diphosphate-binding residues include His42 and His75. 2 residues coordinate isopentenyl diphosphate: His42 and His75. Cys97 is a [4Fe-4S] cluster binding site. Residue His125 coordinates (2E)-4-hydroxy-3-methylbut-2-enyl diphosphate. Dimethylallyl diphosphate is bound at residue His125. An isopentenyl diphosphate-binding site is contributed by His125. The active-site Proton donor is the Glu127. Thr165 provides a ligand contact to (2E)-4-hydroxy-3-methylbut-2-enyl diphosphate. Cys195 provides a ligand contact to [4Fe-4S] cluster. Residues Ser223, Ser224, Asn225, and Ser267 each contribute to the (2E)-4-hydroxy-3-methylbut-2-enyl diphosphate site. Residues Ser223, Ser224, Asn225, and Ser267 each contribute to the dimethylallyl diphosphate site. Residues Ser223, Ser224, Asn225, and Ser267 each contribute to the isopentenyl diphosphate site.

This sequence belongs to the IspH family. The cofactor is [4Fe-4S] cluster.

It carries out the reaction isopentenyl diphosphate + 2 oxidized [2Fe-2S]-[ferredoxin] + H2O = (2E)-4-hydroxy-3-methylbut-2-enyl diphosphate + 2 reduced [2Fe-2S]-[ferredoxin] + 2 H(+). It catalyses the reaction dimethylallyl diphosphate + 2 oxidized [2Fe-2S]-[ferredoxin] + H2O = (2E)-4-hydroxy-3-methylbut-2-enyl diphosphate + 2 reduced [2Fe-2S]-[ferredoxin] + 2 H(+). The protein operates within isoprenoid biosynthesis; dimethylallyl diphosphate biosynthesis; dimethylallyl diphosphate from (2E)-4-hydroxy-3-methylbutenyl diphosphate: step 1/1. It functions in the pathway isoprenoid biosynthesis; isopentenyl diphosphate biosynthesis via DXP pathway; isopentenyl diphosphate from 1-deoxy-D-xylulose 5-phosphate: step 6/6. Functionally, catalyzes the conversion of 1-hydroxy-2-methyl-2-(E)-butenyl 4-diphosphate (HMBPP) into a mixture of isopentenyl diphosphate (IPP) and dimethylallyl diphosphate (DMAPP). Acts in the terminal step of the DOXP/MEP pathway for isoprenoid precursor biosynthesis. The protein is 4-hydroxy-3-methylbut-2-enyl diphosphate reductase of Chlamydia felis (strain Fe/C-56) (Chlamydophila felis).